Reading from the N-terminus, the 776-residue chain is MPDSVEDTSTISLRICLEGHANALALNKDNNQIALAGRSLLKVYSINSNGFTESCNMRGKNQNLSYSANDVAWSTLDSNLLATAATNGVVSVWDLSKFGRQKQLLVYNEHERTAHTVTFHSSEPNILISGSQDGTIKCFDIRSDKSINTYFCNSESVRDVKFSPHTQNIFSAVSENGTVQLWDMRKWDKCMVQFTAHYGPVYTCDWHPTRNWLATGSRDKQIKVWNMDGRPGLEHTIHTIAVVGRVKWRPERTYHIASCALVVDYSVHVWDIRRPYIPFASFNEHTNVTTGIAWQGSDSHCLLSISKDSTIYKHAFKDATRPALKANAQGASLGRFGDISFANKIKEYEPKTSGASNTKSSSFIRRKTNVAGSIQFHLDHSKMYKFMVNDTFSGYPLSESVSRPTQEHESFIGCARELVISGKKLSELCEHNAEVSKKYGKHNATTLWNFIKLFYGSNHFEPPFEHRSSFSNQKNPMNSRRATQVASDWPQQRTELGQDLNGNTPETAHEIDVANVDDDTLGSSGVEHPPTSSVILSETQIISEITFDNFELLRNGFIYVGPTECPKALAFPALHHDVQAARPQLDLKASDHEKSPPPHVPTVLKVSHVPPIPMWEPHKFVSDALMLMNDVGDVQTALTVLIALGEARKLLPIDDALVEHWFYTYVDQLHRYELWNEACEVINRSWLRSVQQLNQHSTAMHTNCGECGRPMGGKVGWYCDKCKSMQSAKCCVCGLIVRGVYAWCQGCSHGGHIEHLQKYFAKHSKCPKCGHLCAYS.

WD repeat units lie at residues 63–103, 109–149, 152–192, 196–235, 238–280, and 284–326; these read NLSY…RQKQ, EHER…SINT, CNSE…KCMV, AHYGPVYTCDWHPTRNWLATGSRDKQIKVWNMDGRPGLEH, HTIA…IPFA, and EHTN…ALKA. The interval 466–490 is disordered; it reads HRSSFSNQKNPMNSRRATQVASDWP. The segment covering 469 to 490 has biased composition (polar residues); it reads SFSNQKNPMNSRRATQVASDWP. The C4-type zinc finger occupies 703-726; the sequence is NCGECGRPMGGKVGWYCDKCKSMQ. Positions 704, 707, 719, 722, 730, 733, 744, 747, 749, 752, 755, 766, 769, 771, and 773 each coordinate Zn(2+). The RING-type; atypical zinc-finger motif lies at 728 to 776; that stretch reads AKCCVCGLIVRGVYAWCQGCSHGGHIEHLQKYFAKHSKCPKCGHLCAYS.

It belongs to the WD repeat WDR24 family. Component of the GATOR complex consisting of mio, Nup44A/Seh1, Im11, Nplr3, Nplr2, Wdr24, Wdr59 and Sec13. Within the GATOR complex, probable component of the GATOR2 subcomplex which is likely composed of mio, Nup44A/Seh1, Wdr24, Wdr59 and Sec13. Interacts with Nup44A/Seh1. Interacts with mio. Interacts with Nplr3. The GATOR2 complex associates with unmet in the absence of S-adenosyl-L-methionine; the mio-Wdr24-Nup44A subcomplex is essential and sufficient for this interaction while Wdr59 and Sec13 are dispensable. This association acts as a nutrient sensor to inhibit mTORC1 signaling in the absence of methionine.

It is found in the lysosome. The protein localises to the cytoplasmic vesicle. It localises to the autophagosome. The enzyme catalyses S-ubiquitinyl-[E2 ubiquitin-conjugating enzyme]-L-cysteine + [acceptor protein]-L-lysine = [E2 ubiquitin-conjugating enzyme]-L-cysteine + N(6)-ubiquitinyl-[acceptor protein]-L-lysine.. Its pathway is protein modification; protein ubiquitination. In terms of biological role, an essential component of the GATOR subcomplex GATOR2 which functions as an activator of the amino acid-sensing branch of the mTORC1 signaling pathway. The two GATOR subcomplexes, GATOR1 and GATOR2, regulate the mTORC1 pathway in order to mediate metabolic homeostasis, female gametogenesis and the response to amino acid limitation and complete starvation. GATOR2 activates the mTORC1 signaling pathway through the inhibition of the GATOR1 subcomplex, controlling the switch to cell proliferation and growth under nutrient replete conditions and during female oocyte development. GATOR2 probably acts as an E3 ubiquitin-protein ligase toward GATOR1. In the presence of abundant amino acids, the GATOR2 complex mediates ubiquitination of components of the GATOR1 complex, leading to GATOR1 inactivation. This GATOR2 component is required for activating mTORC1 and promoting cell growth in both germline and somatic cells. In addition to its role in regulation of the mTORC1 complex, functions independently of mTORC1 to promote the acidification of lysosomes and facilitates autophagic flux. The polypeptide is GATOR2 complex protein Wdr24 (Drosophila melanogaster (Fruit fly)).